A 101-amino-acid chain; its full sequence is Small ribosomal subunit protein uS10 (101 aa).

Belongs to the universal ribosomal protein uS10 family. As to quaternary structure, part of the 30S ribosomal subunit.

Functionally, involved in the binding of tRNA to the ribosomes. This chain is Small ribosomal subunit protein uS10, found in Corynebacterium jeikeium (strain K411).